The sequence spans 484 residues: MVHLGPKPAQKRKGTFTDVSPQLLEALKPIQEQFTISADKLRAIVKHFISELDRGLSKAGGNIPMIPGWVMDFPTGKETGSYLAIDLGGTNLRVVLVKLGGNRDFDTTQSKFALPAHMRTATSDELWDFIAKCLKEFVDEIYPDGCSEPLPLGFTFSYPASQNRINEGILQRWTKGWSIDGIEGKDVVPMLQKAIKKVGVPIDVVALINDTTGTLVASMYTDPEAKMGLIFGTGVNGAYFDVVKDIPKLEGKCPSDIPPESPMAINCEYGSFDNEKYILPRTKYDVQIDEESPRPGQQTFEKMISGYYLGEVLRLILLEFAEEKKLIFKGQNLDKLKVPYVMDASYPSKIEEDPFENLSDVADLFREKLGIETTEPERKIIRCLAELIGERSARFSVCGIAAICQKRGYKTAHCAADGSVYNKYPGFKERTAQALRDIYEWPADVKDPIIIVPAEDGSGVGAAVIAALTEKRLKEGKSVGLLGA.

The region spanning 21 to 467 (PQLLEALKPI…SGVGAAVIAA (447 aa)) is the Hexokinase domain. Residues 75-208 (TGKETGSYLA…GVPIDVVALI (134 aa)) form a hexokinase small subdomain region. Residues 209–456 (NDTTGTLVAS…DPIIIVPAED (248 aa)) form a hexokinase large subdomain region.

Belongs to the hexokinase family. As to quaternary structure, monomer.

The protein resides in the cytoplasm. It carries out the reaction a D-hexose + ATP = a D-hexose 6-phosphate + ADP + H(+). The enzyme catalyses D-fructose + ATP = D-fructose 6-phosphate + ADP + H(+). The catalysed reaction is D-glucose + ATP = D-glucose 6-phosphate + ADP + H(+). Its pathway is carbohydrate metabolism; hexose metabolism. The protein operates within carbohydrate degradation; glycolysis; D-glyceraldehyde 3-phosphate and glycerone phosphate from D-glucose: step 1/4. Functionally, catalyzes the phosphorylation of hexose, such as D-glucose and D-fructose, to hexose 6-phosphate (D-glucose 6-phosphate and D-fructose 6-phosphate, respectively). Mediates the initial step of glycolysis by catalyzing phosphorylation of D-glucose to D-glucose 6-phosphate. This is Hexokinase-2 (HXK2) from Candida albicans (strain SC5314 / ATCC MYA-2876) (Yeast).